Here is a 681-residue protein sequence, read N- to C-terminus: DNA-directed RNA polymerase subunit beta' (681 aa).

The Zn(2+) site is built by Cys-69, Cys-71, Cys-87, and Cys-90. Mg(2+) contacts are provided by Asp-489, Asp-491, and Asp-493.

This sequence belongs to the RNA polymerase beta' chain family. RpoC1 subfamily. As to quaternary structure, in plastids the minimal PEP RNA polymerase catalytic core is composed of four subunits: alpha, beta, beta', and beta''. When a (nuclear-encoded) sigma factor is associated with the core the holoenzyme is formed, which can initiate transcription. Mg(2+) is required as a cofactor. The cofactor is Zn(2+).

The protein localises to the plastid. The protein resides in the chloroplast. The catalysed reaction is RNA(n) + a ribonucleoside 5'-triphosphate = RNA(n+1) + diphosphate. Its function is as follows. DNA-dependent RNA polymerase catalyzes the transcription of DNA into RNA using the four ribonucleoside triphosphates as substrates. This is DNA-directed RNA polymerase subunit beta' from Atropa belladonna (Belladonna).